A 504-amino-acid polypeptide reads, in one-letter code: Dimethylsulfoniopropionate lyase 5 (504 aa).

The protein belongs to the aspartate/glutamate racemases family. ALMA1 subfamily. As to quaternary structure, homotetramer.

The catalysed reaction is S,S-dimethyl-beta-propiothetin = acrylate + dimethyl sulfide + H(+). In terms of biological role, mediates cleavage of dimethylsulfoniopropionate (DMSP) into dimethyl sulfide (DMS) and acrylate. DMS is the principal form by which sulfur is transported from oceans to the atmosphere and is a key component of the ocean sulfur cycle. This Emiliania huxleyi (strain CCMP1516) protein is Dimethylsulfoniopropionate lyase 5.